The sequence spans 67 residues: MNNNNVYSLNNFDFLARSFARMQAEGRPVDIQAVTGNMDEEHRDWFCKRYALYCQQATQAKRLELEH.

This sequence belongs to the GlgS family.

Its function is as follows. Major determinant of cell surface composition. Negatively regulates motility, adhesion and synthesis of biofilm exopolysaccharides. The chain is Surface composition regulator from Salmonella enteritidis PT4 (strain P125109).